The chain runs to 431 residues: Phosphomethylpyrimidine synthase (431 aa).

Substrate-binding positions include N66, M95, Y124, H163, 185–187 (SRG), 226–229 (DGLR), and E265. H269 contributes to the Zn(2+) binding site. Position 292 (Y292) interacts with substrate. A Zn(2+)-binding site is contributed by H333. [4Fe-4S] cluster contacts are provided by C408, C411, and C415.

Belongs to the ThiC family. The cofactor is [4Fe-4S] cluster.

It catalyses the reaction 5-amino-1-(5-phospho-beta-D-ribosyl)imidazole + S-adenosyl-L-methionine = 4-amino-2-methyl-5-(phosphooxymethyl)pyrimidine + CO + 5'-deoxyadenosine + formate + L-methionine + 3 H(+). It participates in cofactor biosynthesis; thiamine diphosphate biosynthesis. Its function is as follows. Catalyzes the synthesis of the hydroxymethylpyrimidine phosphate (HMP-P) moiety of thiamine from aminoimidazole ribotide (AIR) in a radical S-adenosyl-L-methionine (SAM)-dependent reaction. This chain is Phosphomethylpyrimidine synthase, found in Dehalococcoides mccartyi (strain CBDB1).